Reading from the N-terminus, the 92-residue chain is Small ribosomal subunit protein uS19 (92 aa).

The protein belongs to the universal ribosomal protein uS19 family.

In terms of biological role, protein S19 forms a complex with S13 that binds strongly to the 16S ribosomal RNA. The sequence is that of Small ribosomal subunit protein uS19 from Rickettsia africae (strain ESF-5).